A 123-amino-acid chain; its full sequence is Large ribosomal subunit protein uL18 (123 aa).

The protein belongs to the universal ribosomal protein uL18 family. As to quaternary structure, part of the 50S ribosomal subunit; part of the 5S rRNA/L5/L18/L25 subcomplex. Contacts the 5S and 23S rRNAs.

Functionally, this is one of the proteins that bind and probably mediate the attachment of the 5S RNA into the large ribosomal subunit, where it forms part of the central protuberance. This chain is Large ribosomal subunit protein uL18, found in Wolbachia pipientis wMel.